The primary structure comprises 461 residues: Alpha-tubulin N-acetyltransferase 1 (461 aa).

An N-acetyltransferase domain is found at 2–189 (VEFRFDIKPL…NNFVLYEGFF (188 aa)). Acetyl-CoA-binding positions include 123–136 (FYVH…GLGK) and 159–168 (SEKLLSFLSK). Disordered stretches follow at residues 196 to 295 (NGGG…GNHD), 314 to 362 (NSYE…PEVA), and 418 to 443 (RPPG…SGGG). Polar residues predominate over residues 233-254 (RRGSQQQTTPNARLQQITQISP). The segment covering 283-293 (GSAEANSGNGN) has biased composition (low complexity). Over residues 318–336 (PEPEVEPEPEPEPEPEPEP) the composition is skewed to acidic residues. The segment covering 339 to 356 (ITPPSPPPKSHTPTPPSV) has biased composition (pro residues). Residues 426-439 (SPGQDNTDAMSTVS) are compositionally biased toward polar residues.

This sequence belongs to the acetyltransferase ATAT1 family.

It carries out the reaction L-lysyl-[alpha-tubulin] + acetyl-CoA = N(6)-acetyl-L-lysyl-[alpha-tubulin] + CoA + H(+). Its function is as follows. Specifically acetylates 'Lys-40' in alpha-tubulin on the lumenal side of microtubules. Promotes microtubule destabilization and accelerates microtubule dynamics; this activity may be independent of acetylation activity. Acetylates alpha-tubulin with a slow enzymatic rate, due to a catalytic site that is not optimized for acetyl transfer. Enters the microtubule through each end and diffuses quickly throughout the lumen of microtubules. Acetylates only long/old microtubules because of its slow acetylation rate since it does not have time to act on dynamically unstable microtubules before the enzyme is released. Acetylates central spindle microtubules. The polypeptide is Alpha-tubulin N-acetyltransferase 1 (Drosophila melanogaster (Fruit fly)).